Consider the following 288-residue polypeptide: Protoheme IX farnesyltransferase 2 (288 aa).

Transmembrane regions (helical) follow at residues 16-36 (IGVF…GAVP), 38-58 (FAPV…AGAF), 88-108 (LWPL…AFAA), 111-131 (WAAL…TVWL), 139-159 (IVIG…VAVP), 166-186 (LILA…LATA), 227-247 (AFFG…GWFL), and 266-286 (FFAS…EPLL).

This sequence belongs to the UbiA prenyltransferase family. Protoheme IX farnesyltransferase subfamily.

The protein resides in the cell inner membrane. It catalyses the reaction heme b + (2E,6E)-farnesyl diphosphate + H2O = Fe(II)-heme o + diphosphate. It functions in the pathway porphyrin-containing compound metabolism; heme O biosynthesis; heme O from protoheme: step 1/1. Its function is as follows. Converts heme B (protoheme IX) to heme O by substitution of the vinyl group on carbon 2 of heme B porphyrin ring with a hydroxyethyl farnesyl side group. This chain is Protoheme IX farnesyltransferase 2, found in Paramagnetospirillum magneticum (strain ATCC 700264 / AMB-1) (Magnetospirillum magneticum).